We begin with the raw amino-acid sequence, 157 residues long: 6,7-dimethyl-8-ribityllumazine synthase 2 (157 aa).

5-amino-6-(D-ribitylamino)uracil is bound by residues Trp-21, 55 to 57, and 79 to 81; these read AYE and FVV. The active-site Proton donor is Arg-87. Residue Ser-112 coordinates 5-amino-6-(D-ribitylamino)uracil. A (2S)-2-hydroxy-3-oxobutyl phosphate-binding site is contributed by His-126.

This sequence belongs to the DMRL synthase family. Homodecamer, arranged as a dimer of pentamers.

It carries out the reaction (2S)-2-hydroxy-3-oxobutyl phosphate + 5-amino-6-(D-ribitylamino)uracil = 6,7-dimethyl-8-(1-D-ribityl)lumazine + phosphate + 2 H2O + H(+). It functions in the pathway cofactor biosynthesis; riboflavin biosynthesis; riboflavin from 2-hydroxy-3-oxobutyl phosphate and 5-amino-6-(D-ribitylamino)uracil: step 1/2. Its function is as follows. Catalyzes the formation of 6,7-dimethyl-8-ribityllumazine by condensation of 5-amino-6-(D-ribitylamino)uracil with 3,4-dihydroxy-2-butanone 4-phosphate. This is the penultimate step in the biosynthesis of riboflavin. This chain is 6,7-dimethyl-8-ribityllumazine synthase 2 (ribH2), found in Mesorhizobium japonicum (strain LMG 29417 / CECT 9101 / MAFF 303099) (Mesorhizobium loti (strain MAFF 303099)).